Consider the following 1193-residue polypeptide: Chloride channel protein 2 (1193 aa).

Topologically, residues 1–168 are cytoplasmic; it reads MVYFGDRQRD…WIWRHTVARL (168 aa). The tract at residues 76–97 is disordered; the sequence is SHAFYPCPPPAENARDSDSSDD. Helical transmembrane passes span 169–204 and 213–236; these read GEDWVFLALLGIIMALLSFIMDKGISICTNARIWLY and VQYIAWVSLPVCLILFSAGFVHLI. Residues 242-246 carry the Selectivity filter part_1 motif; it reads GSGIP. Serine 243 lines the chloride pocket. The helical intramembrane region spans 245-252; the sequence is IPEMKTIL. The next 2 membrane-spanning stretches (helical) occupy residues 261 to 279 and 286 to 304; these read LTFKTLVAKVIGLTATLGS and EGPFVHIASIVAQLLSKLV. The Selectivity filter part_2 motif lies at 284–288; the sequence is GKEGP. 2 intramembrane regions (helical) span residues 320–332 and 336–344; these read MLAAACAVGVGAC and PVGGVLFSI. 5 consecutive transmembrane segments (helical) span residues 356 to 373, 402 to 430, 439 to 458, 511 to 530, and 536 to 555; these read YWRGFFAAVCGATVFRLL, LFVFALIGLVCGLGGASYVWVHRRYVLFM, FLQKNRFLYPGFLALLVSSI, FGNLVIYTLFTFVVSIIAST, and GMFIPVFKIGAGFGRLVGEF. The short motif at 536-540 is the Selectivity filter part_3 element; sequence GMFIP. Position 538 (phenylalanine 538) interacts with chloride. The segment at residues 576 to 590 is an intramembrane region (helical); it reads GGYAVVGAAAFSGSV. An intramembrane region (note=Loop between two helices) is located at residues 591-592; that stretch reads TH. An intramembrane region (helical) is located at residues 593-604; the sequence is TVSVAVIIFEMT. Positions 605 to 609 form an intramembrane region, note=Loop between two helices; it reads GQITH. Residues 610–626 traverse the membrane as a helical segment; the sequence is VVPVMIAVLVANAVAAL. Over 627–1193 the chain is Cytoplasmic; the sequence is LQPSIYDSII…KSNTENGNHA (567 aa). Tyrosine 632 contributes to the chloride binding site. Residues 663–723 form the CBS 1 domain; it reads MVRDVKYIWH…KMIEKHIGRE (61 aa). 3 disordered regions span residues 848–884, 1103–1122, and 1159–1193; these read TLQDVQPDPETGSLSPAASNHEVEVPRTPSTPGVSKK, NSFVPPTRDEDADEKPAVEK, and IKHTDKGTVSLTMPPQESKQSPSADKSNTENGNHA. Residues 1048–1105 enclose the CBS 2 domain; the sequence is IDPSPFQLVERTSILKVHSLFSMVGINHAYVTKIGRLVGVVGLKELRKAIEDINSNSF. The segment covering 1165–1193 has biased composition (polar residues); sequence GTVSLTMPPQESKQSPSADKSNTENGNHA.

This sequence belongs to the chloride channel (TC 2.A.49) family. In terms of tissue distribution, at embryonic stages 13-16, expressed in a subset of the midline cells of the midline primordium and in all of the midline glia. Expressed along the Z-line of the sarcomere in larval longitudinal muscles.

It localises to the membrane. Its function is as follows. Voltage-gated chloride channel. Chloride channels have several functions including the regulation of cell volume; membrane potential stabilization, signal transduction and transepithelial transport. This Drosophila melanogaster (Fruit fly) protein is Chloride channel protein 2 (ClC-a).